The following is a 1001-amino-acid chain: uncharacterized protein (1001 aa).

Residues 939–948 show a composition bias toward basic and acidic residues; sequence KVVDNKRDAS. The interval 939 to 1001 is disordered; the sequence is KVVDNKRDAS…HTSKRVQKKN (63 aa). 2 positions are modified to phosphoserine: S948 and S950.

This is an uncharacterized protein from Schizosaccharomyces pombe (strain 972 / ATCC 24843) (Fission yeast).